A 334-amino-acid chain; its full sequence is Beta-hexosaminidase (334 aa).

Substrate contacts are provided by residues Asp57, Arg65, Arg128, and 158–159 (KH). His171 functions as the Proton donor/acceptor in the catalytic mechanism. Asp242 serves as the catalytic Nucleophile.

It belongs to the glycosyl hydrolase 3 family. NagZ subfamily.

The protein localises to the cytoplasm. The catalysed reaction is Hydrolysis of terminal non-reducing N-acetyl-D-hexosamine residues in N-acetyl-beta-D-hexosaminides.. It functions in the pathway cell wall biogenesis; peptidoglycan recycling. Its function is as follows. Plays a role in peptidoglycan recycling by cleaving the terminal beta-1,4-linked N-acetylglucosamine (GlcNAc) from peptide-linked peptidoglycan fragments, giving rise to free GlcNAc, anhydro-N-acetylmuramic acid and anhydro-N-acetylmuramic acid-linked peptides. The protein is Beta-hexosaminidase of Methylococcus capsulatus (strain ATCC 33009 / NCIMB 11132 / Bath).